A 623-amino-acid polypeptide reads, in one-letter code: EIN3-binding F-box protein 2 (623 aa).

In terms of domain architecture, F-box spans 52-106; sequence QTSIDVLPEECLFEILRRLPSGQERSACACVSKHWLNLLSSISRSEVNESSVQDV. LRR repeat units follow at residues 119–147, 151–176, 177–202, 203–228, 229–254, 255–281, 307–334, 335–360, 361–386, 387–413, 414–441, 442–467, 468–494, 495–521, 522–547, 548–574, 575–600, and 601–623; these read GKKA…QIRG, ESKV…SLWN, LPAV…DLSR, CPGI…TIDS, CSGV…SIRS, CPRI…KLQM, LQGV…SVMS, CRGM…SLNK, CLLV…KLEE, CHRI…SLAN, CLGI…SIRC, CPGF…ELCG, LNGV…NLSE, CINV…NLDG, CKNI…DISN, TLVS…SIGG, CSSI…NIQR, and CGRI…DILY.

In terms of assembly, part of a SCF (SKP1-cullin-F-box) protein ligase complex. Interacts with CUL1, SKP1A/ASK1, SKP1B/ASK2, EIN3, and EIL1. Ubiquitous.

It localises to the nucleus. It functions in the pathway protein modification; protein ubiquitination. In terms of biological role, component of SCF(EBF1) E3 ubiquitin ligase complexes, which may mediate the ubiquitination and subsequent proteasomal degradation of target proteins (probably including EIN3 and EIL1). Regulator of the ethylene signaling cascade by modulating the stability of EIN3 and EIL1 proteins. This Arabidopsis thaliana (Mouse-ear cress) protein is EIN3-binding F-box protein 2 (EBF2).